The chain runs to 148 residues: Glutamyl-tRNA(Gln) amidotransferase subunit C, mitochondrial (148 aa).

Belongs to the GatC family. In terms of assembly, subunit of the heterotrimeric GatCAB amidotransferase (AdT) complex, composed of A, B and C subunits.

The protein localises to the mitochondrion. It catalyses the reaction L-glutamyl-tRNA(Gln) + L-glutamine + ATP + H2O = L-glutaminyl-tRNA(Gln) + L-glutamate + ADP + phosphate + H(+). Its function is as follows. Allows the formation of correctly charged Gln-tRNA(Gln) through the transamidation of misacylated Glu-tRNA(Gln) in the mitochondria. The reaction takes place in the presence of glutamine and ATP through an activated gamma-phospho-Glu-tRNA(Gln). The polypeptide is Glutamyl-tRNA(Gln) amidotransferase subunit C, mitochondrial (Drosophila melanogaster (Fruit fly)).